The primary structure comprises 833 residues: MTFYNHKEIEPKWQAFWADNHTFKTGTDASKPKFYALDMFPYPSGAGLHVGHPEGYTATDILSRFKRAQGHNVLHPMGWDAFGLPAEQYAMDTGNDPAEFTAENIANFKRQINALGFSYDWDREVNTTDPNYYKWTQWIFTKLYEKGLAYEAEVPVNWVEELGTAIANEEVLPDGTSERGGYPVVRKPMRQWMLKITAYAERLLEDLEEVDWPESIKDMQRNWIGKSTGANVTFKVKDTDKDFTVFTTRPDTLFGATYAVLAPEHALVDAITTADQAEAVAEYKRQASLKSDLARTDLAKEKTGVWTGAYAINPVNGKEIPVWIADYVLASYGTGAIMAVPAHDERDWEFAKQFKLDIIPVLEGGNVEEAAFTEDGLHINSDFLDGLDKASAIAKMVEWLEAEGVGNEKVTYRLRDWLFSRQRYWGEPIPIIHWEDGTSTAVPESELPLVLPVTKDIRPSGTGESPLANLTDWLEVTREDGVKGRRETNTMPQWAGSSWYYLRYIDPHNTEKLADEELLKQWLPVDIYVGGAEHAVLHLLYARFWHKVLYDLGVVPTKEPFQKLFNQGMILGTSYRDSRGALVATDKVEKRDGSFFHVETGEELEQAPAKMSKSLKNVVNPDDVVEQYGADTLRVYEMFMGPLDASIAWSEEGLEGSRKFLDRVYRLITTKEITKENSGALDKVYNETVKAVTEQVDQMKFNTAIAQLMVFVNAANKEDKLFSDYAKGFVQLIAPFAPHLGEELWQVLTASGESISYVPWPSYDESKLVENEIEIVVQIKGKVKAKLVVAKDLSREELQDLALANEKVQSEIAGKDIIKVIAVPNKLVNIVVK.

A 'HIGH' region motif is present at residues 41–52 (PYPSGAGLHVGH). The 'KMSKS' region motif lies at 610-614 (KMSKS). Position 613 (Lys613) interacts with ATP.

Belongs to the class-I aminoacyl-tRNA synthetase family.

The protein localises to the cytoplasm. The catalysed reaction is tRNA(Leu) + L-leucine + ATP = L-leucyl-tRNA(Leu) + AMP + diphosphate. This chain is Leucine--tRNA ligase, found in Streptococcus agalactiae serotype Ia (strain ATCC 27591 / A909 / CDC SS700).